A 1449-amino-acid polypeptide reads, in one-letter code: MKKLFVVLVVMPLIYGDNFPCSKLTNRTIGNHWNLIETFLLNYSSRLSPNSDVVLGDYFPTVQPWFNCIRNNSNDLYVTLENLKALYWDYATENITLNHKQRLNVVVNGYPYSITVTTTRNFNSAEGAIICICKGSPPTTTTESSLTCNWGSECRLNHKFPICPSNSEANCGNMLYGLQWFADAVVAYLHGASYRISFENQWSGTVTLGDMRATTLETAGTLVDLWWFNPVYDVSYYRVNNKNGTTVVSNCTDQCASYVANVFTTQPGGFIPSDFSFNNWFLLTNSSTLVSGKLVTKQPLLVNCLWPVPSFEEAASTLCFEGAGFDQCNGPVLNNTVDVIRFNLNFTTNVQSGKGATVFSLNTTGGVTLEISCYNDTVSDSSFSSYGEMPFGVTDGPRYCYVLYNGTALKYLGTLPPSVKEIAISKWGHFYINGYNFFSTFPIDCISFNLTTGDSDVFWTIAYTSYTEALVQVENTAITKVTYCNSYVNNIKCSQLTANLNNGFYPVSSSEVGLVNKSVVLLPSFYTHTIVNITIGLGMKRSGYGQPIASTLSNITLPMQDNNTDVYCIRSDQFSVYVHSTCKSSLWDNVFKRNCTDVLDATAVIKTGTCPFSFDKLNNYLTFNKFCLSLSPVGANCKFDVAARTRTNDQVVRSLYVIYEEGDNIVGVPSDNSGLHDLSVLHLDSCTDYNIYGRTGVGIIRQTNRTLLSGLYYTSLSGDLLGFKNVSDGVIYSVTPCDVSAQAAVIDGTIVGAITSINSELLGLTHWTTTPNFYYYSIYNYTNDRTRGTAIDSNDVDCEPVITYSNIGVCKNGALVFINVTHSDGDVQPISTGNVTIPTNFTISVQVEYIQVYTTPVSIDCSRYVCNGNPRCNKLLTQYVSACQTIEQALAMGARLENMEVGSMLFVSENALKLASVEAFNSSETLDPIYKEWPNIGGSWLEGLKYILPSDNSKRKYRSAIEDLLFAKVVTSGLGTVDEDYKRCTGGYDIADLVCAQYYNGIMVLPGVANADKMTMYTASLAGGITLGALGGGAVAIPFAVAVQARLNYVALQTDVLNKNQQILASAFNQAIGNITQSFGKVNDAIHQTSRGLATVAKALAKVQDVVNTQGQALSHLTVQLQNNFQAISSSISDIYNRLDELSADAQVDRLITGRLTALNAFVSQTLTRQAEVRASRQLAKDKVNECVRSQSQRFGFCGNGTHLFSLANAAPNGMIFFHTVLLPTAYETVTAWAGICALDGDRTFGLVVKDVQLTLFRNLDDKFYLTPRTMYQPRVATSSDFVQIEGCDVLFVNATVSDLPSIIPDYIDINQTVQDILENFRPNWTVPELTFDIFNATYLNLTGEIDDLEFRSEKLHNTTVELAILIDNINNTLVNLEWLNRIETYVKWPWYVWLLIGLVVIFCIPLLLFCCCSTGCCGCIGCLGSCCHSICSRRQFENYEPIEKVHVH.

The signal sequence occupies residues 1 to 28 (MKKLFVVLVVMPLIYGDNFPCSKLTNRT). S1 stretches follow at residues 17 to 776 (DNFP…FYYY) and 29 to 776 (IGNH…FYYY). The Virion surface segment spans residues 29-1390 (IGNHWNLIET…NRIETYVKWP (1362 aa)). The interaction with host ANPEP stretch occupies residues 657-801 (VIYEEGDNIV…DSNDVDCEPV (145 aa)). The tract at residues 777–1449 (SIYNYTNDRT…YEPIEKVHVH (673 aa)) is S2. A fusion peptide region spans residues 1022–1043 (AGGITLGALGGGAVAIPFAVAV). A heptad repeat 1 (HR1) region spans residues 1037 to 1156 (IPFAVAVQAR…QVDRLITGRL (120 aa)). Coiled-coil stretches lie at residues 1104–1148 (QDVV…DAQV) and 1338–1380 (TYLN…LEWL). A heptad repeat 2 (HR2) region spans residues 1305 to 1402 (PDYIDINQTV…VWLLIGLVVI (98 aa)). Residues 1391 to 1410 (WYVWLLIGLVVIFCIPLLLF) traverse the membrane as a helical segment. At 1411–1449 (CCCSTGCCGCIGCLGSCCHSICSRRQFENYEPIEKVHVH) the chain is on the intravirion side. The short motif at 1445 to 1449 (KVHVH) is the KxHxx element.

The protein belongs to the alphacoronaviruses spike protein family. Homotrimer. During virus morphogenesis, found in a complex with M and HE proteins. Interacts with host ANPEP.

The protein localises to the virion membrane. Its subcellular location is the host endoplasmic reticulum-Golgi intermediate compartment membrane. S1 region attaches the virion to the cell membrane by interacting with host ANPEP/aminopeptidase N, initiating the infection. Binding to the receptor probably induces conformational changes in the S glycoprotein unmasking the fusion peptide of S2 region and activating membranes fusion. S2 region belongs to the class I viral fusion protein. Under the current model, the protein has at least 3 conformational states: pre-fusion native state, pre-hairpin intermediate state, and post-fusion hairpin state. During viral and target cell membrane fusion, the coiled coil regions (heptad repeats) regions assume a trimer-of-hairpins structure, positioning the fusion peptide in close proximity to the C-terminal region of the ectodomain. The formation of this structure appears to drive apposition and subsequent fusion of viral and target cell membranes. The polypeptide is Spike glycoprotein (Porcine transmissible gastroenteritis coronavirus (strain Miller) (TGEV)).